The primary structure comprises 86 residues: MKSIVFVALFGLALLAVACSASEDAHKELLKEVVRAMVVDKTDAVQAEERECRWYLGGCSQDGDCCKHLQCHSNYEWCIWDGTFSK.

A signal peptide spans 1-21 (MKSIVFVALFGLALLAVACSA). A propeptide spanning residues 22-50 (SEDAHKELLKEVVRAMVVDKTDAVQAEER) is cleaved from the precursor. Intrachain disulfides connect C52/C66, C59/C71, and C65/C78.

The protein belongs to the neurotoxin 10 (Hwtx-1) family. 17 (Hntx-9) subfamily. As to expression, expressed by the venom gland.

The protein localises to the secreted. In terms of biological role, ion channel inhibitor. This is Omega-theraphotoxin-Hhn1f 3 from Cyriopagopus hainanus (Chinese bird spider).